We begin with the raw amino-acid sequence, 393 residues long: uncharacterized protein (393 aa).

The next 8 helical transmembrane spans lie at isoleucine 15 to phenylalanine 35, tryptophan 56 to isoleucine 76, phenylalanine 86 to valine 106, alanine 131 to tryptophan 151, leucine 176 to phenylalanine 196, leucine 253 to isoleucine 273, leucine 289 to alanine 309, and valine 349 to tryptophan 369.

The protein localises to the cell membrane. This is an uncharacterized protein from Mycoplasma genitalium (strain ATCC 33530 / DSM 19775 / NCTC 10195 / G37) (Mycoplasmoides genitalium).